A 230-amino-acid polypeptide reads, in one-letter code: uncharacterized protein (230 aa).

A compositionally biased stretch (polar residues) spans 1–11 (MPVPSVTVTTD). The interval 1–88 (MPVPSVTVTT…TLKRPTSNSI (88 aa)) is disordered. Positions 63-73 (DDQHRHSDVHS) are enriched in basic and acidic residues. A compositionally biased stretch (polar residues) spans 79-88 (TLKRPTSNSI). The residue at position 106 (Ser-106) is a Phosphoserine. The span at 156-179 (LKREDSRVSSTKKEHINDHTDMHS) shows a compositional bias: basic and acidic residues. The segment at 156 to 203 (LKREDSRVSSTKKEHINDHTDMHSTRSKVTTNSQGSSLEPNKLNMAVE) is disordered. A compositionally biased stretch (polar residues) spans 182–194 (SKVTTNSQGSSLE).

This is an uncharacterized protein from Saccharomyces cerevisiae (strain ATCC 204508 / S288c) (Baker's yeast).